The sequence spans 513 residues: tRNA A64-2'-O-ribosylphosphate transferase (513 aa).

TRNA backbone modifying enzyme that mediates initiator/ elongator tRNA discrimination. This enzyme modifies exclusively the initiator tRNA in position 64 using 5'-phosphoribosyl-1'-pyrophosphate as the modification donor. Recognize the stem-loop IV region that is unique in eukaryotic cytoplasmic initiator tRNAs. This Saccharomyces cerevisiae (strain ATCC 204508 / S288c) (Baker's yeast) protein is tRNA A64-2'-O-ribosylphosphate transferase (RIT1).